The sequence spans 186 residues: UPF0301 protein Neut_0448 (186 aa).

This sequence belongs to the UPF0301 (AlgH) family.

This is UPF0301 protein Neut_0448 from Nitrosomonas eutropha (strain DSM 101675 / C91 / Nm57).